The sequence spans 251 residues: Eukaryotic translation initiation factor 4E-3 (251 aa).

The tract at residues 200-251 (DSSARTSSTVKPRICLPAKDPAPVKEKGPAATTSPSNPGTEATGTSPATPTP) is disordered. The segment covering 230 to 251 (ATTSPSNPGTEATGTSPATPTP) has biased composition (polar residues).

The protein belongs to the eukaryotic initiation factor 4E family. In terms of assembly, eIF4F is a multi-subunit complex, the composition of which varies with external and internal environmental conditions. It is composed of at least eIF4A, eIF4E and eIF4G. eIF4E is also known to interact with other partners. Interacts with mxt. Component of the pid-1 variant of the PETISCO complex (also called the pid-3, erh-2, tofu-6, and ife-3 small RNA complex) containing at least pid-1, tofu-6, ife-3, pid-3, and erh-2, which is required for the biogenesis of a class of 21 nucleotide PIWI-interacting RNAs (piRNAs) that possess a uracil residue at the 5'-end (also called 21U-RNAs). Component of the tost-1 variant of the PETISCO complex (also called the pid-3, erh-2, tofu-6, and ife-3 small RNA complex) containing at least tost-1, tofu-6, ife-3, pid-3, and erh-2, which plays an essential role in embryogenesis. Within the pid-1 and tost-1 variants of the PETISCO complexes interacts with tofu-6 (via C-terminus). In contrast to the pid-1 variant of the PETISCO complex, the tost-1 variant of the PETISCO complex plays a minor role in the biogenesis of 21U-RNAs. In terms of tissue distribution, highly expressed in the germline (at protein level).

It is found in the cytoplasmic granule. The protein localises to the cytoplasm. Its subcellular location is the perinuclear region. Its function is as follows. Recognizes and binds the 7-methylguanosine-containing mRNA cap during an early step in the initiation of protein synthesis and facilitates ribosome binding by inducing the unwinding of the mRNAs secondary structures. All 5 eIF4E proteins bind monomethyl cap structures. Only ife-1, ife-2 and ife-5 bind trimethyl cap structures which result from trans-splicing. Translation of trimethyl cap structure mRNAs may be regulated by intracellular redox state; disulfide bonds change the width and depth of the cap-binding cavity determining selectivity to mRNA caps. Ife-3 is essential for viability. Component of the pid-1 and tost-1 variants of the PETISCO complexes, which have roles in the biogenesis of a class of 21 nucleotide PIWI-interacting RNAs (piRNAs) that possess a uracil residue at the 5'-end (also called 21U-RNAs) and embryogenesis, respectively. Within the pid-1 variant of the PETISCO complex binds to capped 21U-RNA precursor molecules, possibly playing a role in the processing of the 5' end of the molecules to promote binding of other complex components such as pid-3. However, it is not essential for the biogenesis of 21U-RNAs by itself. Within the tost-1 variant of the PETISCO complex binds to splice leader SL1 RNA fragments to possibly play a role in their processing. The protein is Eukaryotic translation initiation factor 4E-3 of Caenorhabditis elegans.